The chain runs to 100 residues: Large ribosomal subunit protein uL23 (100 aa).

The protein belongs to the universal ribosomal protein uL23 family. In terms of assembly, part of the 50S ribosomal subunit. Contacts protein L29, and trigger factor when it is bound to the ribosome.

In terms of biological role, one of the early assembly proteins it binds 23S rRNA. One of the proteins that surrounds the polypeptide exit tunnel on the outside of the ribosome. Forms the main docking site for trigger factor binding to the ribosome. In Mycobacterium ulcerans (strain Agy99), this protein is Large ribosomal subunit protein uL23.